The sequence spans 527 residues: AAA ATPase forming ring-shaped complexes (527 aa).

A compositionally biased stretch (low complexity) spans 1–18; it reads MVTMSSPTDSSPSNSFSD. Residues 1–38 form a disordered region; the sequence is MVTMSSPTDSSPSNSFSDFNREEQSRLSDEVRQLKRTN. A compositionally biased stretch (basic and acidic residues) spans 19-33; that stretch reads FNREEQSRLSDEVRQ. Residues 21 to 53 adopt a coiled-coil conformation; it reads REEQSRLSDEVRQLKRTNSDLGARNAKLAEMLK. ATP is bound at residue 257–262; it reads GCGKTL. The segment at 492–515 is disordered; sequence DENQQSEDLPNTSNPDEWSRITGR. The span at 497–507 shows a compositional bias: polar residues; that stretch reads SEDLPNTSNPD.

This sequence belongs to the AAA ATPase family. In terms of assembly, homohexamer. Assembles into a hexameric ring structure.

The chain is AAA ATPase forming ring-shaped complexes from Corynebacterium glutamicum (strain R).